We begin with the raw amino-acid sequence, 1082 residues long: Probable arabinosyltransferase B (1082 aa).

13 helical membrane-spanning segments follow: residues 28–50 (WVAT…LPVT), 223–241 (LAAM…LALW), 262–281 (VTAV…VIGA), 333–352 (SIWI…LLLS), 359–381 (LGPA…LGAW), 420–442 (AITT…AALL), 462–481 (WPLI…VVFA), 522–544 (AISR…FMML), 557–574 (AWRL…LMFT), 578–600 (WTHH…TVLV), 613–635 (AFLS…WWYV), 650–672 (GGVQ…AFWL), and 689–711 (APIP…IGVV).

It belongs to the emb family.

The protein resides in the cell membrane. Its function is as follows. Arabinosyl transferase responsible for the polymerization of arabinose into the arabinan of arabinogalactan. In Mycolicibacterium smegmatis (Mycobacterium smegmatis), this protein is Probable arabinosyltransferase B (embB).